We begin with the raw amino-acid sequence, 61 residues long: Sperm protamine P1 (61 aa).

Residues 1–61 (MARYRHSRSR…RRYSRRRRRY (61 aa)) are disordered.

The protein belongs to the protamine P1 family. Testis.

It localises to the nucleus. The protein resides in the chromosome. Functionally, protamines substitute for histones in the chromatin of sperm during the haploid phase of spermatogenesis. They compact sperm DNA into a highly condensed, stable and inactive complex. This Macropus giganteus (Eastern gray kangaroo) protein is Sperm protamine P1 (PRM1).